The chain runs to 424 residues: Otefin (424 aa).

One can recognise an LEM domain in the interval 1–30; the sequence is MADVDDFDSLSNAELRAKMLAQGLPNIPVT. The tract at residues 1–50 is required for binding to Med and germline stem cell maintenance; the sequence is MADVDDFDSLSNAELRAKMLAQGLPNIPVTDSSRKVLVKRLRASIGGQAS. A disordered region spans residues 42-186; that stretch reads RASIGGQASP…SSKRADREEN (145 aa). 3 positions are modified to phosphoserine: Ser44, Ser50, and Ser54. Residue Thr63 is modified to Phosphothreonine. The segment covering 65–80 has biased composition (low complexity); that stretch reads APAPGAPSAPAAASTP. The short motif at 92–99 is the Nuclear localization signal element; that stretch reads ATKARRTI. Basic and acidic residues predominate over residues 103–133; sequence EAKEPVRRLPEEAIRRRPDEADRLRSEEPVA. Ser152 is subject to Phosphoserine. The segment covering 157–170 has biased composition (basic and acidic residues); that stretch reads SERKVVEPLRKPET. Residues Ser192 and Ser198 each carry the phosphoserine modification. The disordered stretch occupies residues 259 to 278; the sequence is PSVPSARAQTTSSTRSYDYA. The segment covering 262-274 has biased composition (low complexity); it reads PSARAQTTSSTRS. A required for binding to Med region spans residues 271–400; that stretch reads STRSYDYASN…NRWLNSLEQK (130 aa). Phosphoserine is present on Ser321. A Phosphothreonine modification is found at Thr324. At Ser326 the chain carries Phosphoserine. Thr358 bears the Phosphothreonine mark. Phosphoserine is present on residues Ser378 and Ser385. Residues 400-424 are essential for nuclear membrane localization and germline stem cell maintenance; that stretch reads KYHIKSKLFIVLLVLLLIGVYYIFY. The tract at residues 406 to 424 is essential for nuclear membrane localization; it reads KLFIVLLVLLLIGVYYIFY.

In terms of assembly, interacts with Med. Interacts with Lam. Interacts with aurA, alphaTub84B, gammaTub23C and gammaTub37C. Interacts with Nemp. Phosphorylation at Thr-63 by aurA may be required for exit from mitosis. May be phosphorylated by Cdk1 and Pka-C1. In terms of tissue distribution, expressed in all cell types of the germarium and testis. Expressed in nurse cells, follicle cells and oocytes.

Its subcellular location is the nucleus inner membrane. The protein resides in the nucleus. It is found in the nucleoplasm. It localises to the cytoplasm. The protein localises to the chromosome. Its subcellular location is the cytoskeleton. The protein resides in the spindle pole. It is found in the microtubule organizing center. It localises to the centrosome. In terms of biological role, inner nuclear membrane protein. Involved in the attachment of membrane vesicles to chromatin during nuclear assembly, and is probably required for centrosome maturation and cell cycle progression during mitosis. Essential for differentiation of certain tissues and the maintenance of progenitor cell populations. Required for the differentiation and maintenance of male and female germline stem cells (GSCs), as well as the maintenance of somatic cells in the GSC niche. This role is likely to be independent of the BMP (Dpp) pathway that negatively regulates bam transcription during GSC differentiation. During development, plays essential and redundant functions with the other LEM domain proteins; bocks and MAN1. Also has a redundant but important role with bocks during larval development. The polypeptide is Otefin (Drosophila melanogaster (Fruit fly)).